We begin with the raw amino-acid sequence, 20 residues long: Venom peptide Ocy8 (20 aa).

As to expression, expressed by the venom gland.

The protein localises to the secreted. The protein is Venom peptide Ocy8 of Opisthacanthus cayaporum (South American scorpion).